The chain runs to 633 residues: Extracellular metalloproteinase 3 (633 aa).

Positions 1 to 18 are cleaved as a signal peptide; the sequence is MHGLLLAGLLALPMNVLA. Positions 19-246 are excised as a propeptide; it reads HPAEQHASNV…VHNVVDYVAS (228 aa). Residue Asn-410 is glycosylated (N-linked (GlcNAc...) asparagine). His-429 is a binding site for Zn(2+). Glu-430 is a catalytic residue. His-433 serves as a coordination point for Zn(2+). 2 N-linked (GlcNAc...) asparagine glycosylation sites follow: Asn-480 and Asn-622.

Belongs to the peptidase M36 family. Zn(2+) serves as cofactor.

The protein resides in the secreted. Functionally, secreted metalloproteinase probably acting as a virulence factor. This is Extracellular metalloproteinase 3 (MEP3) from Trichophyton tonsurans (Scalp ringworm fungus).